The chain runs to 444 residues: 3-isopropylmalate dehydratase large subunit (444 aa).

Residues cysteine 348, cysteine 408, and cysteine 411 each coordinate [4Fe-4S] cluster.

Belongs to the aconitase/IPM isomerase family. LeuC type 1 subfamily. Heterodimer of LeuC and LeuD. [4Fe-4S] cluster is required as a cofactor.

It catalyses the reaction (2R,3S)-3-isopropylmalate = (2S)-2-isopropylmalate. Its pathway is amino-acid biosynthesis; L-leucine biosynthesis; L-leucine from 3-methyl-2-oxobutanoate: step 2/4. Catalyzes the isomerization between 2-isopropylmalate and 3-isopropylmalate, via the formation of 2-isopropylmaleate. The chain is 3-isopropylmalate dehydratase large subunit from Buchnera aphidicola subsp. Uroleucon ambrosiae.